We begin with the raw amino-acid sequence, 103 residues long: Large ribosomal subunit protein eL14 (103 aa).

The protein belongs to the eukaryotic ribosomal protein eL14 family.

This is Large ribosomal subunit protein eL14 from Ignicoccus hospitalis (strain KIN4/I / DSM 18386 / JCM 14125).